Here is a 529-residue protein sequence, read N- to C-terminus: Neuronal acetylcholine receptor subunit alpha-2 (529 aa).

The N-terminal stretch at 1-26 (MGPSCPVFLSFTKLSLWWLLLTPAGG) is a signal peptide. The interval 27 to 56 (EEAKRPPPRAPGDPLSSPSPTALPQGGSHT) is disordered. The Extracellular portion of the chain corresponds to 27-264 (EEAKRPPPRA…VTYAFVIRRL (238 aa)). Asn79 and Asn129 each carry an N-linked (GlcNAc...) asparagine glycan. Residues Cys183 and Cys197 are joined by a disulfide bond. Asn235 is a glycosylation site (N-linked (GlcNAc...) asparagine). Cys247 and Cys248 are oxidised to a cystine. 3 consecutive transmembrane segments (helical) span residues 265–289 (PLFYTINLIIPCLLISCLTVLVFYL), 297–315 (ITLCISVLLSLTVFLLLIT), and 331–352 (YLLFTMIFVTLSIVITVFVLNV). The Cytoplasmic portion of the chain corresponds to 353 to 502 (HHRSPSTHTM…WKYVAMVIDR (150 aa)). A helical membrane pass occupies residues 503 to 521 (IFLWLFIIVCFLGTIGLFL).

It belongs to the ligand-gated ion channel (TC 1.A.9) family. Acetylcholine receptor (TC 1.A.9.1) subfamily. Alpha-2/CHRNA2 sub-subfamily. As to quaternary structure, neuronal AChR is composed of two different types of subunits: alpha and non-alpha (beta). CHRNA2/alpha-2 subunit can be combined to CHRNB2/beta-2 or CHRNB4/beta-4 to give rise to functional receptors. Both CHRNA2:CHRNB2 and CHRNA2:CHRNB4 nAChR complexes are heteropentamers with two subtypes: LS (low agonist sensitivity) with a (CHRNA2)3:(CHRNB2/4)2 and HS (high agonist sensitivity) with a (CHRNA2)2:(CHRNB2/4)3 stoichiometries; the subtypes differ in their subunit binding interfaces which are involved in ligand binding.

The protein localises to the synaptic cell membrane. Its subcellular location is the cell membrane. It catalyses the reaction Ca(2+)(in) = Ca(2+)(out). The enzyme catalyses K(+)(in) = K(+)(out). The catalysed reaction is Na(+)(in) = Na(+)(out). In terms of biological role, component of neuronal acetylcholine receptors (nAChRs) that function as pentameric, ligand-gated cation channels with high calcium permeability among other activities. nAChRs are excitatory neurotrasnmitter receptors formed by a collection of nAChR subunits known to mediate synaptic transmission in the nervous system and the neuromuscular junction. Each nAchR subunit confers differential attributes to channel properties, including activation, deactivation and desensitization kinetics, pH sensitivity, cation permeability, and binding to allosteric modulators. CHRNA2 forms heteropentameric neuronal acetylcholine receptors with CHRNB2 and CHRNB4 and plays a role in nicotine dependence. This chain is Neuronal acetylcholine receptor subunit alpha-2, found in Homo sapiens (Human).